Here is a 209-residue protein sequence, read N- to C-terminus: uncharacterized protein (209 aa).

An N-terminal signal peptide occupies residues 1–17; it reads MKKLVTGLLALSLFLAA. The disordered stretch occupies residues 17-106; the sequence is ACGQDSDQQK…SGQTTNNQKS (90 aa). Residue Cys18 is the site of N-palmitoyl cysteine attachment. Cys18 is lipidated: S-diacylglycerol cysteine. Residues 23–70 show a composition bias toward basic and acidic residues; the sequence is DQQKDSNKEKDDKAKTEQQDKKTNDSSKDKKDNKDDSKDVNKDNKDNS. Over residues 71-106 the composition is skewed to low complexity; it reads ANDNQQQSNSNATNNDQNQTNNNQSNSGQTTNNQKS.

The protein resides in the cell membrane. This is an uncharacterized protein from Staphylococcus aureus (strain MRSA252).